Here is a 143-residue protein sequence, read N- to C-terminus: Mediator of RNA polymerase II transcription subunit 21 (143 aa).

Positions 53-130 (KEFEKNIDEL…KVRTLTQDFT (78 aa)) form a coiled coil.

Belongs to the Mediator complex subunit 21 family. As to quaternary structure, component of the Mediator complex.

It localises to the nucleus. In terms of biological role, component of the Mediator complex, a coactivator involved in the regulated transcription of nearly all RNA polymerase II-dependent genes. Mediator functions as a bridge to convey information from gene-specific regulatory proteins to the basal RNA polymerase II transcription machinery. Mediator is recruited to promoters by direct interactions with regulatory proteins and serves as a scaffold for the assembly of a functional preinitiation complex with RNA polymerase II and the general transcription factors. The sequence is that of Mediator of RNA polymerase II transcription subunit 21 (SRB7) from Kluyveromyces lactis (strain ATCC 8585 / CBS 2359 / DSM 70799 / NBRC 1267 / NRRL Y-1140 / WM37) (Yeast).